A 132-amino-acid chain; its full sequence is Large ribosomal subunit protein bL17 (132 aa).

Belongs to the bacterial ribosomal protein bL17 family. Part of the 50S ribosomal subunit. Contacts protein L32.

This Saccharophagus degradans (strain 2-40 / ATCC 43961 / DSM 17024) protein is Large ribosomal subunit protein bL17.